The following is a 598-amino-acid chain: F-box/WD repeat-containing protein 8 (598 aa).

Met1 carries the post-translational modification N-acetylmethionine. Residues 20 to 97 form a disordered region; that stretch reads SQALRRRRRL…PDRDATEPEP (78 aa). Residues 29–44 are compositionally biased toward basic and acidic residues; it reads LEAGERRSPRRPEAGA. Residues 51-65 show a composition bias toward low complexity; it reads GYLGLAQGLLEGAGR. Basic and acidic residues predominate over residues 73-93; that stretch reads RGGDRKDTSSRSRSPPDRDAT. Ser84 carries the phosphoserine modification. Phosphoserine; by MTOR is present on Ser86. An F-box domain is found at 113-159; the sequence is PFFDVRLPYELAINIFQYLNRRELGLCAQVSKTWKVIAEDEVLWYRL. WD repeat units lie at residues 201–250, 259–299, 300–340, 341–383, 384–429, 430–475, 476–513, and 514–561; these read AVSE…LESE, QPYV…FEHD, ARIQ…SEFE, VQKL…LHYV, YGQP…SKLG, NALG…SAHQ, LGVS…EVHS, and RHPV…AYEF.

Component of the Cul7-RING(FBXW8) complex consisting of CUL7, RBX1, SKP1 and FBXW8; within the complex interacts with CUL7 and SKP1. Interacts with GLMN isoform 1. Interacts with OBSL1, CUL1, CUL2, CCT6B, PFDN5, CCT2, CCT3, CCT6A, CCT7, VBP1, CCDC8, ARF1, TRIP13, PDCD5 and GORASP1. Interacts with MAP4K1/HPK1 (when autophosphorylated). Associated component of the 3M complex. Interacts with POUF51 (when phosphorylated on 'Ser-347'). Post-translationally, phosphorylation at Ser-86 by mTORC2 promotes FBXW8 stabilization, allowing its translocation to the cytosol in response to insulin. In terms of tissue distribution, widely expressed. Expressed at higher level in skeletal muscle, cartilage and lung.

It is found in the cytoplasm. It localises to the perinuclear region. The protein resides in the golgi apparatus. Its subcellular location is the cytosol. It participates in protein modification; protein ubiquitination. Substrate-recognition component of the Cul7-RING(FBXW8) ubiquitin ligase complex, which mediates the ubiquitination and subsequent proteasomal degradation of target proteins. The Cul7-RING(FBXW8) complex mediates ubiquitination and consequent degradation of GORASP1, acting as a component of the ubiquitin ligase pathway that regulates Golgi morphogenesis and dendrite patterning in brain. Mediates ubiquitination and degradation of IRS1 in a mTOR-dependent manner: the Cul7-RING(FBXW8) complex recognizes and binds IRS1 previously phosphorylated by S6 kinase (RPS6KB1 or RPS6KB2). The Cul7-RING(FBXW8) complex also mediates ubiquitination of MAP4K1/HPK1: recognizes and binds autophosphorylated MAP4K1/HPK1, leading to its degradation, thereby affecting cell proliferation and differentiation. The Cul7-RING(FBXW8) complex also mediates ubiquitination of phosphorylated cyclin-D1 (CCND1). The Cul7-RING(FBXW8) complex is however not a major regulator of CCND1 stability during the G1/S transition. Associated component of the 3M complex, suggesting that it mediates some of 3M complex functions. This chain is F-box/WD repeat-containing protein 8 (Fbxw8), found in Mus musculus (Mouse).